The sequence spans 243 residues: Myrosinase MB2 (243 aa).

Asn30 carries an N-linked (GlcNAc...) asparagine glycan. Tyr51 contacts substrate. The active-site Nucleophile is Glu125. Residues Trp173 and 180 to 181 (EF) contribute to the substrate site. N-linked (GlcNAc...) asparagine glycosylation is present at Asn216.

It belongs to the glycosyl hydrolase 1 family. In terms of assembly, homodimer. In vacuoles called myrosin grains of a certain class of cells, myrosin cells, distributed in the cotyledons and the axis of the embryo as well as in different organs of the growing plant.

The protein localises to the vacuole. The enzyme catalyses a thioglucoside + H2O = a sugar + a thiol.. Functionally, degradation of glucosinolates (glucose residue linked by a thioglucoside bound to an amino acid derivative) to glucose, sulfate and any of the products: thiocyanates, isothiocyanates, nitriles, epithionitriles or oxazolidine-2-thiones. The chain is Myrosinase MB2 from Sinapis alba (White mustard).